The following is a 199-amino-acid chain: Translation initiation factor IF-3 (199 aa).

This sequence belongs to the IF-3 family. Monomer.

It is found in the cytoplasm. Its function is as follows. IF-3 binds to the 30S ribosomal subunit and shifts the equilibrium between 70S ribosomes and their 50S and 30S subunits in favor of the free subunits, thus enhancing the availability of 30S subunits on which protein synthesis initiation begins. In Gloeobacter violaceus (strain ATCC 29082 / PCC 7421), this protein is Translation initiation factor IF-3.